The chain runs to 97 residues: Large ribosomal subunit protein bL27 (97 aa).

The propeptide occupies 1 to 9 (MFTFDLQLF).

The protein belongs to the bacterial ribosomal protein bL27 family. The N-terminus is cleaved by ribosomal processing cysteine protease Prp.

This Syntrophomonas wolfei subsp. wolfei (strain DSM 2245B / Goettingen) protein is Large ribosomal subunit protein bL27.